Consider the following 351-residue polypeptide: MSLQWWRDTCREADPQMRRRAAERQDRLTKPRGSLGRLEQVAIDLAALQGRERPSLERIWVTVFAGDHGVVAEGISAYPQAVTGEMLRNFVRGGAAISVLARELGAGLEVVDLGTAFPLEALPGVRHLRLAAGTANFVEAPAMGAEQCLLALEAGRESVRRAEQAGSQLFIGGEMGIGNTTAAAAMACALLDAPASALVGPGTGLDASGVAHKAAVIERALALHGAHRADPFETLRRLGGLEIAALAGAYLACAQKGMVALVDGYICSVAALCAVRLNPACRDWLLFAHSGAEPGHRHVLEALAAQPLLDLGLRLGEGSGAALAVPLLRQACVLHAGMATFAEAAVSDRPA.

Catalysis depends on glutamate 317, which acts as the Proton acceptor.

The protein belongs to the CobT family.

It carries out the reaction 5,6-dimethylbenzimidazole + nicotinate beta-D-ribonucleotide = alpha-ribazole 5'-phosphate + nicotinate + H(+). It participates in nucleoside biosynthesis; alpha-ribazole biosynthesis; alpha-ribazole from 5,6-dimethylbenzimidazole: step 1/2. In terms of biological role, catalyzes the synthesis of alpha-ribazole-5'-phosphate from nicotinate mononucleotide (NAMN) and 5,6-dimethylbenzimidazole (DMB). The sequence is that of Nicotinate-nucleotide--dimethylbenzimidazole phosphoribosyltransferase from Pseudomonas aeruginosa (strain LESB58).